The sequence spans 512 residues: MEISVASVTISVVLAVVSWWIWRTLQWVWFKPKMLEHYLRRQGLAGTPYTPLVGDLKKNFTMLSEARSKPLKLTDDISPRVVPYPLQMFKTYGRTYFTWFGPIPTITIMDPEQIKEVFNKVYDFQKPHTFPLATIIAKGLANYDGDKWAKHRRIINPAFHIEKIKNMVPAFHQSCREVVGEWDQLVSDKGSSCEVDVWPGLVSMTADVISRTAFGSSYKEGQRIFELQAELAQLIIQAFRKAFIPGYSYLPTKSNRRMKAAAREIQVILRGIVNKRLRAREAGEAPSDDLLGILLESNLRQTEGNGMSTEDLMEECKLFYFAGQETTSVLLVWTMVLLSQHQDWQARAREEVKQVFGDKEPDAEGLNQLKVMTMILYEVLRLYPPVTQLTRAIHKELKLGDLTLPGGVQISLPILLVQHDIELWGNDAAEFNPDRFKDGLSKATKSQVSFFPFAWGPRICIGQNFALLEAKMAMALILRRFSFEISPSYVHAPYTVITIHPQFGAQLIMHKL.

Residues 2–22 (EISVASVTISVVLAVVSWWIW) form a helical membrane-spanning segment. A heme-binding site is contributed by Cys460.

It belongs to the cytochrome P450 family. Heme is required as a cofactor.

It localises to the membrane. The polypeptide is Cytochrome P450 72A15 (CYP72A15) (Arabidopsis thaliana (Mouse-ear cress)).